The chain runs to 311 residues: DNA-directed RNA polymerase subunit alpha (311 aa).

The alpha N-terminal domain (alpha-NTD) stretch occupies residues 1–228 (MQYQIERIDH…ELFQPLATVT (228 aa)). The segment at 239–311 (PSPEAQIPLE…ISIPQSRTSV (73 aa)) is alpha C-terminal domain (alpha-CTD).

This sequence belongs to the RNA polymerase alpha chain family. In cyanobacteria the RNAP catalytic core is composed of 2 alpha, 1 beta, 1 beta', 1 gamma and 1 omega subunit. When a sigma factor is associated with the core the holoenzyme is formed, which can initiate transcription.

It catalyses the reaction RNA(n) + a ribonucleoside 5'-triphosphate = RNA(n+1) + diphosphate. DNA-dependent RNA polymerase catalyzes the transcription of DNA into RNA using the four ribonucleoside triphosphates as substrates. In Prochlorococcus marinus (strain MIT 9312), this protein is DNA-directed RNA polymerase subunit alpha.